We begin with the raw amino-acid sequence, 142 residues long: Neurofilament heavy polypeptide (142 aa).

The IF rod domain occupies 1-142; sequence MRGAVLRLGA…EAAKVNTDAM (142 aa). Residues 26 to 74 adopt a coiled-coil conformation; it reads IAHVRQRLDDEARQRQEAEAAARALARFAQEAEAARVELQKKAQALQEE.

Belongs to the intermediate filament family. Forms heterodimers with NEFL; which can further hetero-oligomerize (in vitro). Forms heterodimers with INA (in vitro). There are a number of repeats of the tripeptide K-S-P, NFH is phosphorylated on a number of the serines in this motif. It is thought that phosphorylation of NFH results in the formation of interfilament cross bridges that are important in the maintenance of axonal caliber. Post-translationally, phosphorylation seems to play a major role in the functioning of the larger neurofilament polypeptides (NF-M and NF-H), the levels of phosphorylation being altered developmentally and coincidentally with a change in the neurofilament function. In terms of processing, phosphorylated in the head and rod regions by the PKC kinase PKN1, leading to the inhibition of polymerization.

The protein localises to the cytoplasm. Its subcellular location is the cytoskeleton. The protein resides in the cell projection. It localises to the axon. Neurofilaments usually contain three intermediate filament proteins: NEFL, NEFM, and NEFH which are involved in the maintenance of neuronal caliber. NEFH has an important function in mature axons that is not subserved by the two smaller NF proteins. May additionally cooperate with the neuronal intermediate filament proteins PRPH and INA to form neuronal filamentous networks. The chain is Neurofilament heavy polypeptide (NEFH) from Sus scrofa (Pig).